Here is a 439-residue protein sequence, read N- to C-terminus: Exosome complex component RRP45 (439 aa).

The segment at 1–268 (MKETPLSNCE…AEITELILKA (268 aa)) is ARE binding. A Phosphoserine modification is found at Ser65. Lys297 carries the post-translational modification N6-acetyllysine; alternate. A Glycyl lysine isopeptide (Lys-Gly) (interchain with G-Cter in SUMO1); alternate cross-link involves residue Lys297. Lys297 participates in a covalent cross-link: Glycyl lysine isopeptide (Lys-Gly) (interchain with G-Cter in SUMO2); alternate. 4 positions are modified to phosphoserine: Ser306, Val325, Ser327, and Ser346. Disordered regions lie at residues 335 to 363 (GTAQIGEGVENSWGDLEDSEKEDDEGGGD) and 391 to 439 (LSDS…RAAN). Acidic residues predominate over residues 349 to 361 (DLEDSEKEDDEGG). Phosphoserine occurs at positions 392, 394, 409, and 411. Residue Lys419 forms a Glycyl lysine isopeptide (Lys-Gly) (interchain with G-Cter in SUMO2) linkage. The segment covering 425 to 439 (SKKPVKRRKKKRAAN) has biased composition (basic residues).

It belongs to the RNase PH family. Component of the RNA exosome core complex (Exo-9), composed of EXOSC1, EXOSC2, EXOSC3, EXOSC4, EXOSC5, EXOSC6, EXOSC7, EXOSC8 and EXOSC9; within the complex interacts with EXOSC3, EXOSC4, EXOSC5 and DIS3. The catalytically inactive RNA exosome core complex (Exo-9) associates with the catalytic subunit EXOSC10/RRP6. Exo-9 may associate with DIS3 to form the nucleolar exosome complex, or DIS3L to form the cytoplasmic exosome complex. Exo-9 is formed by a hexameric base ring consisting of the heterodimers EXOSC4-EXOSC9, EXOSC5-EXOSC8 and EXOSC6-EXOSC7, and a cap ring consisting of EXOSC1, EXOSC2 and EXOSC3. The RNA exosome complex associates with cofactors C1D/RRP47, MPHOSPH6/MPP6 and MTREX/MTR4. Interacts (via C-terminus region) with SETX (via N-terminus domain); the interaction enhances SETX sumoylation. Interacts with DIS3; the interaction is direct.

It is found in the cytoplasm. The protein resides in the nucleus. It localises to the nucleolus. Its subcellular location is the nucleoplasm. Functionally, non-catalytic component of the RNA exosome complex which has 3'-&gt;5' exoribonuclease activity and participates in a multitude of cellular RNA processing and degradation events. In the nucleus, the RNA exosome complex is involved in proper maturation of stable RNA species such as rRNA, snRNA and snoRNA, in the elimination of RNA processing by-products and non-coding 'pervasive' transcripts, such as antisense RNA species and promoter-upstream transcripts (PROMPTs), and of mRNAs with processing defects, thereby limiting or excluding their export to the cytoplasm. The RNA exosome may be involved in Ig class switch recombination (CSR) and/or Ig variable region somatic hypermutation (SHM) by targeting AICDA deamination activity to transcribed dsDNA substrates. In the cytoplasm, the RNA exosome complex is involved in general mRNA turnover and specifically degrades inherently unstable mRNAs containing AU-rich elements (AREs) within their 3' untranslated regions, and in RNA surveillance pathways, preventing translation of aberrant mRNAs. It seems to be involved in degradation of histone mRNA. The catalytic inactive RNA exosome core complex of 9 subunits (Exo-9) is proposed to play a pivotal role in the binding and presentation of RNA for ribonucleolysis, and to serve as a scaffold for the association with catalytic subunits and accessory proteins or complexes. EXOSC9 binds to ARE-containing RNAs. This is Exosome complex component RRP45 (EXOSC9) from Homo sapiens (Human).